Here is a 796-residue protein sequence, read N- to C-terminus: Lon protease 2 (796 aa).

The region spanning 9 to 206 (LPIVILKENV…KLIVNLSIEI (198 aa)) is the Lon N-terminal domain. 352–359 (GPPGIGKT) serves as a coordination point for ATP. The Lon proteolytic domain maps to 617–796 (IDSSGFVYGL…EEVFDYLNII (180 aa)). Active-site residues include Ser-702 and Lys-745.

It belongs to the peptidase S16 family. Homohexamer. Organized in a ring with a central cavity.

It localises to the cytoplasm. It catalyses the reaction Hydrolysis of proteins in presence of ATP.. Functionally, ATP-dependent serine protease that mediates the selective degradation of mutant and abnormal proteins as well as certain short-lived regulatory proteins. Required for cellular homeostasis and for survival from DNA damage and developmental changes induced by stress. Degrades polypeptides processively to yield small peptide fragments that are 5 to 10 amino acids long. Binds to DNA in a double-stranded, site-specific manner. The sequence is that of Lon protease 2 (lon2) from Borreliella burgdorferi (strain ATCC 35210 / DSM 4680 / CIP 102532 / B31) (Borrelia burgdorferi).